The primary structure comprises 338 residues: MKRMIALDGAQGEGGGQILRSALSLSMITGQPFTITSIRAGRAKPGLLRQHLTAVKAAAEICRATVEGAELGSQRLVFRLGTVRGGEYRFAIGSAGSCTLVLQTVLPALWFADGPSRVEVSGGTDNPSAPPADFIRRVLEPLLAKIGIHQQTTLLRHGFYPAGGGVVATEVSPVASFNTLQLGERGNIVQMRGEVLLAGVPRHVAEREIATLAGSFSLHEQNIHNLPRDQGPGNTVSLEVESENITERFFVVGEKRVSAEVVAAQLVKEVKRYLASPAVVGEYLADQLVLPMALAGAGEFTVAHPSCHLLTNIAVVERFLPVRFGLIETDGVTRVSIE.

ATP contacts are provided by residues Gln103 and 283–287 (YLADQ). His308 functions as the Tele-AMP-histidine intermediate in the catalytic mechanism.

The protein belongs to the RNA 3'-terminal cyclase family. Type 1 subfamily.

The protein localises to the cytoplasm. The catalysed reaction is a 3'-end 3'-phospho-ribonucleotide-RNA + ATP = a 3'-end 2',3'-cyclophospho-ribonucleotide-RNA + AMP + diphosphate. Catalyzes the conversion of 3'-phosphate to a 2',3'-cyclic phosphodiester at the end of RNA. The mechanism of action of the enzyme occurs in 3 steps: (A) adenylation of the enzyme by ATP; (B) transfer of adenylate to an RNA-N3'P to produce RNA-N3'PP5'A; (C) and attack of the adjacent 2'-hydroxyl on the 3'-phosphorus in the diester linkage to produce the cyclic end product. The biological role of this enzyme is unknown but it is likely to function in some aspects of cellular RNA processing. The chain is RNA 3'-terminal phosphate cyclase from Shigella sonnei (strain Ss046).